Here is a 199-residue protein sequence, read N- to C-terminus: Isopentenyl-diphosphate Delta-isomerase (199 aa).

Mn(2+) is bound by residues His40 and His47. The region spanning 45-186 (PRHLAFSCHV…PALLSPWAVE (142 aa)) is the Nudix hydrolase domain. The active site involves Cys82. A Mg(2+)-binding site is contributed by Cys82. His84 lines the Mn(2+) pocket. Glu102 lines the Mg(2+) pocket. Mn(2+) contacts are provided by Glu131 and Glu133. Glu133 is an active-site residue.

It belongs to the IPP isomerase type 1 family. It depends on Mg(2+) as a cofactor. The cofactor is Mn(2+).

The protein resides in the cytoplasm. The catalysed reaction is isopentenyl diphosphate = dimethylallyl diphosphate. The protein operates within isoprenoid biosynthesis; dimethylallyl diphosphate biosynthesis; dimethylallyl diphosphate from isopentenyl diphosphate: step 1/1. In terms of biological role, catalyzes the 1,3-allylic rearrangement of the homoallylic substrate isopentenyl (IPP) to its highly electrophilic allylic isomer, dimethylallyl diphosphate (DMAPP). In Cutibacterium acnes (strain DSM 16379 / KPA171202) (Propionibacterium acnes), this protein is Isopentenyl-diphosphate Delta-isomerase.